Here is a 1405-residue protein sequence, read N- to C-terminus: Centlein (1405 aa).

The span at 1 to 14 shows a compositional bias: pro residues; sequence MAARSPPSPHPSPP. Residues 1–79 form a disordered region; sequence MAARSPPSPH…GGAAPAHAPL (79 aa). An N-acetylalanine modification is found at Ala2. 2 positions are modified to phosphoserine: Ser5 and Ser22. Basic and acidic residues predominate over residues 48–58; that stretch reads VVADESDKIWV. Gly residues predominate over residues 61–71; the sequence is EGSGGRRGPGG. A coiled-coil region spans residues 95–126; it reads EEAMVTRTQLLEEELSSLKEELALCQADKEFV. Disordered regions lie at residues 421–450 and 493–529; these read KLKEKLQESQGAPLPLPQESDPDYSAQVPH and SRKSIMTSAEGKHKEPPVKRSRSLSPKSSFTDSEELQ. Coiled coils occupy residues 613–655 and 681–793; these read NELA…ELNR and KNGK…ELIN. The tract at residues 865–917 is disordered; that stretch reads WEDVSESSSDSEAQTSQTLGTIIVETSQKISPTEDGKDQKESDPTEDSQTQGK. Residues 877-895 show a composition bias toward polar residues; that stretch reads AQTSQTLGTIIVETSQKIS. Residues 896-907 show a composition bias toward basic and acidic residues; the sequence is PTEDGKDQKESD. Positions 980 to 1311 form a coiled coil; sequence NIILLRERII…IRELKKMKKN (332 aa). Thr1343 carries the post-translational modification Phosphothreonine.

In terms of assembly, interacts with CEP250 and CEP68. Interacts with NEK2; the interaction leads to phosphorylation of CNTLN. Post-translationally, phosphorylated directly or indirectly by NEK2.

The protein localises to the cytoplasm. Its subcellular location is the cytoskeleton. It localises to the microtubule organizing center. The protein resides in the centrosome. It is found in the centriole. Required for centrosome cohesion and recruitment of CEP68 to centrosomes. The chain is Centlein (CNTLN) from Homo sapiens (Human).